The chain runs to 286 residues: Homoserine kinase (286 aa).

Residue 78-88 (PLARGLGSSSS) coordinates ATP.

The protein belongs to the GHMP kinase family. Homoserine kinase subfamily.

The protein localises to the cytoplasm. It catalyses the reaction L-homoserine + ATP = O-phospho-L-homoserine + ADP + H(+). It participates in amino-acid biosynthesis; L-threonine biosynthesis; L-threonine from L-aspartate: step 4/5. In terms of biological role, catalyzes the ATP-dependent phosphorylation of L-homoserine to L-homoserine phosphate. The polypeptide is Homoserine kinase (Streptococcus equi subsp. zooepidemicus (strain H70)).